The primary structure comprises 556 residues: Formate--tetrahydrofolate ligase (556 aa).

Position 64–71 (64–71 (TPAGEGKT)) interacts with ATP.

Belongs to the formate--tetrahydrofolate ligase family.

It carries out the reaction (6S)-5,6,7,8-tetrahydrofolate + formate + ATP = (6R)-10-formyltetrahydrofolate + ADP + phosphate. It functions in the pathway one-carbon metabolism; tetrahydrofolate interconversion. The protein is Formate--tetrahydrofolate ligase of Actinobacillus pleuropneumoniae serotype 5b (strain L20).